A 322-amino-acid polypeptide reads, in one-letter code: GTP 3',8-cyclase (322 aa).

The Radical SAM core domain maps to 5 to 233 (KYGRVVDYLR…NAPASIYRLD (229 aa)). A GTP-binding site is contributed by Arg14. Cys21 and Cys25 together coordinate [4Fe-4S] cluster. S-adenosyl-L-methionine is bound at residue Tyr27. Cys28 contacts [4Fe-4S] cluster. Arg64 lines the GTP pocket. Residue Gly68 participates in S-adenosyl-L-methionine binding. Residue Thr95 coordinates GTP. Ser119 is a binding site for S-adenosyl-L-methionine. Residue Lys155 coordinates GTP. Met189 is an S-adenosyl-L-methionine binding site. [4Fe-4S] cluster contacts are provided by Cys249 and Cys252. A GTP-binding site is contributed by 254–256 (RIR). [4Fe-4S] cluster is bound at residue Cys266.

Belongs to the radical SAM superfamily. MoaA family. Monomer and homodimer. The cofactor is [4Fe-4S] cluster.

The catalysed reaction is GTP + AH2 + S-adenosyl-L-methionine = (8S)-3',8-cyclo-7,8-dihydroguanosine 5'-triphosphate + 5'-deoxyadenosine + L-methionine + A + H(+). The protein operates within cofactor biosynthesis; molybdopterin biosynthesis. Its function is as follows. Catalyzes the cyclization of GTP to (8S)-3',8-cyclo-7,8-dihydroguanosine 5'-triphosphate. The sequence is that of GTP 3',8-cyclase from Campylobacter curvus (strain 525.92).